A 479-amino-acid chain; its full sequence is Ribosomal RNA small subunit methyltransferase F (479 aa).

Residues 125–131 (AAAPGSK), glutamate 149, aspartate 176, and aspartate 194 each bind S-adenosyl-L-methionine. Cysteine 247 functions as the Nucleophile in the catalytic mechanism.

The protein belongs to the class I-like SAM-binding methyltransferase superfamily. RsmB/NOP family.

It localises to the cytoplasm. It catalyses the reaction cytidine(1407) in 16S rRNA + S-adenosyl-L-methionine = 5-methylcytidine(1407) in 16S rRNA + S-adenosyl-L-homocysteine + H(+). Specifically methylates the cytosine at position 1407 (m5C1407) of 16S rRNA. This Escherichia fergusonii (strain ATCC 35469 / DSM 13698 / CCUG 18766 / IAM 14443 / JCM 21226 / LMG 7866 / NBRC 102419 / NCTC 12128 / CDC 0568-73) protein is Ribosomal RNA small subunit methyltransferase F.